We begin with the raw amino-acid sequence, 256 residues long: Thiazole synthase (256 aa).

The Schiff-base intermediate with DXP role is filled by lysine 95. Residues glycine 156, 182–183 (AG), and 204–205 (NT) each bind 1-deoxy-D-xylulose 5-phosphate.

This sequence belongs to the ThiG family. As to quaternary structure, homotetramer. Forms heterodimers with either ThiH or ThiS.

The protein resides in the cytoplasm. It catalyses the reaction [ThiS sulfur-carrier protein]-C-terminal-Gly-aminoethanethioate + 2-iminoacetate + 1-deoxy-D-xylulose 5-phosphate = [ThiS sulfur-carrier protein]-C-terminal Gly-Gly + 2-[(2R,5Z)-2-carboxy-4-methylthiazol-5(2H)-ylidene]ethyl phosphate + 2 H2O + H(+). The protein operates within cofactor biosynthesis; thiamine diphosphate biosynthesis. In terms of biological role, catalyzes the rearrangement of 1-deoxy-D-xylulose 5-phosphate (DXP) to produce the thiazole phosphate moiety of thiamine. Sulfur is provided by the thiocarboxylate moiety of the carrier protein ThiS. In vitro, sulfur can be provided by H(2)S. This is Thiazole synthase from Escherichia coli O8 (strain IAI1).